The chain runs to 77 residues: U8-lycotoxin-Ls1j (77 aa).

A signal peptide spans 1-20 (MKLIIFTGLILFAIVSLIEA). Residues 21 to 26 (QANNEK) constitute a propeptide that is removed on maturation.

It belongs to the neurotoxin 19 (CSTX) family. 08 (U8-Lctx) subfamily. Post-translationally, contains 4 disulfide bonds. As to expression, expressed by the venom gland.

Its subcellular location is the secreted. This Lycosa singoriensis (Wolf spider) protein is U8-lycotoxin-Ls1j.